The sequence spans 123 residues: Small ribosomal subunit protein uS12 (123 aa).

The segment at 1–28 is disordered; it reads MPTIQQLIRKPRQPKVKRSKSQHLEQCP. Residues 9 to 21 show a composition bias toward basic residues; it reads RKPRQPKVKRSKS. Asp-89 is modified (3-methylthioaspartic acid).

It belongs to the universal ribosomal protein uS12 family. As to quaternary structure, part of the 30S ribosomal subunit. Contacts proteins S8 and S17. May interact with IF1 in the 30S initiation complex.

With S4 and S5 plays an important role in translational accuracy. Functionally, interacts with and stabilizes bases of the 16S rRNA that are involved in tRNA selection in the A site and with the mRNA backbone. Located at the interface of the 30S and 50S subunits, it traverses the body of the 30S subunit contacting proteins on the other side and probably holding the rRNA structure together. The combined cluster of proteins S8, S12 and S17 appears to hold together the shoulder and platform of the 30S subunit. This Ruegeria pomeroyi (strain ATCC 700808 / DSM 15171 / DSS-3) (Silicibacter pomeroyi) protein is Small ribosomal subunit protein uS12.